A 37-amino-acid chain; its full sequence is Large ribosomal subunit protein bL36 (37 aa).

It belongs to the bacterial ribosomal protein bL36 family.

The protein is Large ribosomal subunit protein bL36 of Prochlorococcus marinus (strain MIT 9303).